A 223-amino-acid chain; its full sequence is Probable cell wall protein PGA61 (223 aa).

Residues 1–16 (MKSGLLLAVILPVAFA) form the signal peptide. Asparagine 25 carries N-linked (GlcNAc...) asparagine glycosylation. The interval 83–134 (GAPSSSSTPTSSTETTSSTEAETTEAETTEQPSSSTSSNTESSKTTILETPS) is disordered. 2 stretches are compositionally biased toward low complexity: residues 84–103 (APSS…STEA) and 111–128 (TEQP…SKTT). An N-linked (GlcNAc...) asparagine glycan is attached at asparagine 188. Residue asparagine 202 is the site of GPI-anchor amidated asparagine attachment. A propeptide spans 203-223 (GAGRAAVIGSGSLLALLLNFI) (removed in mature form).

Belongs to the IHD1 family. The GPI-anchor is attached to the protein in the endoplasmic reticulum and serves to target the protein to the cell surface. There, the glucosamine-inositol phospholipid moiety is cleaved off and the GPI-modified mannoprotein is covalently attached via its lipidless GPI glycan remnant to the 1,6-beta-glucan of the outer cell wall layer.

Its subcellular location is the secreted. The protein resides in the cell wall. It localises to the membrane. Its function is as follows. Probable GPI-anchored cell wall protein that may be involved in cell wall organization, hyphal growth, as well as in virulence. The protein is Probable cell wall protein PGA61 (PGA61) of Candida albicans (strain SC5314 / ATCC MYA-2876) (Yeast).